We begin with the raw amino-acid sequence, 287 residues long: Ribonuclease Z (287 aa).

Zn(2+) is bound by residues H64, H66, D68, H69, H124, D191, and H250. D68 functions as the Proton acceptor in the catalytic mechanism.

This sequence belongs to the RNase Z family. Homodimer. Zn(2+) is required as a cofactor.

It carries out the reaction Endonucleolytic cleavage of RNA, removing extra 3' nucleotides from tRNA precursor, generating 3' termini of tRNAs. A 3'-hydroxy group is left at the tRNA terminus and a 5'-phosphoryl group is left at the trailer molecule.. Zinc phosphodiesterase, which displays some tRNA 3'-processing endonuclease activity. Probably involved in tRNA maturation, by removing a 3'-trailer from precursor tRNA. This chain is Ribonuclease Z, found in Pyrobaculum aerophilum (strain ATCC 51768 / DSM 7523 / JCM 9630 / CIP 104966 / NBRC 100827 / IM2).